An 86-amino-acid chain; its full sequence is MKIELFLVVIFALAIHMATAEEVIESDIEPAERGCIKSGQRCGSPHGLPSNCCDDWKYKGRCGCTMGVCTCGKNCPSRGCDYRTKG.

The signal sequence occupies residues 1-20 (MKIELFLVVIFALAIHMATA). A propeptide spanning residues 21 to 33 (EEVIESDIEPAER) is cleaved from the precursor. 4 cysteine pairs are disulfide-bonded: Cys35-Cys53, Cys42-Cys62, Cys52-Cys71, and Cys64-Cys69. A Lysine amide modification is found at Lys85.

It belongs to the neurotoxin 39 family. Expressed by the venom gland.

It localises to the secreted. Functionally, toxin active against S.frugiperda larvae. May act on sodium channels (Nav). This is U2-sicaritoxin-Li1b from Loxosceles intermedia (Brown spider).